A 295-amino-acid chain; its full sequence is MITELHGIDIRENEPLKHYTYTKVGGPADFLAFPRNHYELSRIVAYANKENMPWLVLGNASNLIVRDGGIRGFVIMFDKLNAVHLNGYTLKAEAGANLIETTKIAKFHSLTGFEFACGIPGSIGGAVFMNAGAYGGEISHIFLSAKVLTPSGEIKTISARDMAFGYRHSAIQETGDIVISAKFALKPGNYDTISQEMNRLNHLRQLKQPLEFPSCGSVFKRPPGHFAGQLIMEANLKGHRIGGVEVSEKHAGFMINVADGTAKDYEDLIAYVIETVENHSGVKLEPEVRIIGENL.

Residues 23–188 form the FAD-binding PCMH-type domain; it reads KVGGPADFLA…ISAKFALKPG (166 aa). Residue R167 is part of the active site. Residue S217 is the Proton donor of the active site. E287 is an active-site residue.

The protein belongs to the MurB family. The cofactor is FAD.

It is found in the cytoplasm. It carries out the reaction UDP-N-acetyl-alpha-D-muramate + NADP(+) = UDP-N-acetyl-3-O-(1-carboxyvinyl)-alpha-D-glucosamine + NADPH + H(+). It functions in the pathway cell wall biogenesis; peptidoglycan biosynthesis. Functionally, cell wall formation. The protein is UDP-N-acetylenolpyruvoylglucosamine reductase of Streptococcus pyogenes serotype M12 (strain MGAS9429).